The primary structure comprises 631 residues: Nucleoside triphosphatase I (631 aa).

The region spanning 42–204 (FLGLDSMHSL…TMLVNLLRPG (163 aa)) is the Helicase ATP-binding domain. 55–62 (HETGVGKT) contributes to the ATP binding site. The DEXH box motif lies at 141-144 (DECH). In terms of domain architecture, Helicase C-terminal spans 367–532 (KFIDVCLGIL…EFVQLFRVFK (166 aa)). The segment at 457 to 524 (DIFILDMTWN…EIIQSKSKEF (68 aa)) is binding to the cap-specific mRNA (nucleoside-2'-O-)-methyltransferase.

The protein belongs to the helicase family. NPH I subfamily. As to quaternary structure, monomer. Interacts (via C-terminus) with RAP94/OPG109 (via N-terminus). Interacts with the cap-specific mRNA (nucleoside-2'-O-)-methyltransferase OPG102.

The protein resides in the virion. It carries out the reaction a ribonucleoside 5'-triphosphate + H2O = a ribonucleoside 5'-diphosphate + phosphate + H(+). Its function is as follows. DNA-dependent ATPase that acts as a 5' to 3' translocase on single-stranded DNA and thereby plays a role in transcription termination of viral early genes. Uses forward translocation in concert with the viral RNA polymerase RAP94/OPG109 subunit and the capping enzyme/VTF to catalyze release of UUUUUNU-containing nascent RNA from the elongation complex. In addition, acts as a positive elongation factor to assist transcription through problematic sequences. This Bos taurus (Bovine) protein is Nucleoside triphosphatase I (OPG123).